Here is a 209-residue protein sequence, read N- to C-terminus: uncharacterized protein (209 aa).

An MPN domain is found at 1 to 67; it reads MEILPKYKPE…LIMYNYWTID (67 aa). Zn(2+) contacts are provided by His17, His19, and Asp30. The JAMM motif motif lies at 17–30; it reads HTHPKGPAEPSIND.

This is an uncharacterized protein from Acidianus convivator (ATV).